Here is a 330-residue protein sequence, read N- to C-terminus: Protein pelota homolog (330 aa).

This sequence belongs to the eukaryotic release factor 1 family. Pelota subfamily. In terms of assembly, monomer. It depends on a divalent metal cation as a cofactor.

It localises to the cytoplasm. Its function is as follows. May function in recognizing stalled ribosomes, interact with stem-loop structures in stalled mRNA molecules, and effect endonucleolytic cleavage of the mRNA. May play a role in the release non-functional ribosomes and degradation of damaged mRNAs. Has endoribonuclease activity. This is Protein pelota homolog from Pyrobaculum islandicum (strain DSM 4184 / JCM 9189 / GEO3).